The primary structure comprises 158 residues: Putative 8-oxo-dGTP diphosphatase YtkD (158 aa).

The Nudix hydrolase domain occupies Asp-6–Pro-145. The Nudix box motif lies at Gly-53–Gly-74. Glu-68 and Glu-72 together coordinate Mg(2+).

Belongs to the Nudix hydrolase family. The cofactor is Mg(2+).

The enzyme catalyses 8-oxo-dGTP + H2O = 8-oxo-dGMP + diphosphate + H(+). With respect to regulation, not induced by oxidative damage (following treatment with paraquat or hydrogen peroxide). Not induced by mitomycin C. Not induced by sigma-B general stress inducers such as sodium chloride, ethanol or heat. Functionally, involved in the GO system responsible for removing an oxidatively damaged form of guanine (7,8-dihydro-8-oxoguanine, 8-oxo-dGTP) from DNA and the nucleotide pool. 8-oxo-dGTP is inserted opposite dA and dC residues of template DNA with almost equal efficiency thus leading to A.T to G.C transversions. Functions, in conjunction with MutT, to protect vegetatively growing cells from DNA-damaging agents such as H(2)O(2) or t-BHP (t-butylhydroperoxide). The 2 proteins do not however protect spores. According to PubMed:15576788, phosphohydrolase that catalyzes the hydrolysis of all common nucleoside triphosphates as well as of the mutagenic analog 8-oxo-dGTP. The high catalytic efficiency on dGTP is in contrast to results from PubMed:14761999. According to PubMed:14761999, catalyzes the hydrolysis of 8-oxo-dGTP with a specific activity 413 times higher than that exhibited against dGTP. Preferentially catalyzes the hydrolysis of 8-oxo-dGTP and 8-oxo-GTP. According to PubMed:15576788, hydrolyzes nucleoside triphosphates in a stepwise fashion through the diphosphate to the monophosphate, releasing two molecules of inorganic orthophosphate. The polypeptide is Putative 8-oxo-dGTP diphosphatase YtkD (ytkD) (Bacillus subtilis (strain 168)).